The following is a 1429-amino-acid chain: Alpha-agarase (1429 aa).

An N-terminal signal peptide occupies residues 1–26 (MFKTKRSLLNSSIAISFAVLGVQAQA). 2 consecutive CBM6 domains span residues 29 to 161 (LELQ…FRLT) and 211 to 345 (FVIQ…LTFT). Disordered regions lie at residues 349 to 400 (SDGG…DGVS) and 474 to 495 (NTPA…GEPG). Residues 369–378 (SSDSCPNTPT) are compositionally biased toward polar residues. The PA14 domain occupies 490 to 638 (NGGEPGDSYY…GGTNFVHPSN (149 aa)). A CBM6 3 domain is found at 662-793 (IYIQLEDFDE…QWSGDLVRLA (132 aa)).

The protein belongs to the glycosyl hydrolase 96 family. As to quaternary structure, homodimer. Ca(2+) serves as cofactor.

The enzyme catalyses Endohydrolysis of 1,3-alpha-L-galactosidic linkages in agarose, yielding agarotetraose as the major product.. In terms of biological role, alpha-agarase. Does not hydrolyze agarotetraose, agarohexaose, kappa-carrageenan, iota-carrageenan or lambda-carrageenan. The chain is Alpha-agarase from Alteromonas agarilytica.